Here is a 259-residue protein sequence, read N- to C-terminus: Sesquipedalian-2 (259 aa).

Positions 17–121 constitute a PH domain; sequence PADHTGFLRS…WVKALSRASF (105 aa). Positions 124-150 form a coiled coil; sequence MRLVVRELESQLQDARQSLALHRCASQ. Positions 155–178 are disordered; that stretch reads SCSKSQAPDHRAPDPENGHFLPRD. The segment covering 161–178 has biased composition (basic and acidic residues); sequence APDHRAPDPENGHFLPRD. The short motif at 223 to 235 is the F&amp;H element; the sequence is CFSTLHDWYGKEI.

It belongs to the sesquipedalian family. In terms of assembly, forms homodimers and heterodimers with PHETA1. Interacts with OCRL and INPP5B.

It is found in the early endosome. Its subcellular location is the recycling endosome. The protein localises to the golgi apparatus. The protein resides in the trans-Golgi network. It localises to the cytoplasmic vesicle. It is found in the clathrin-coated vesicle. Functionally, plays a role in endocytic trafficking. Required for receptor recycling from endosomes, both to the trans-Golgi network and the plasma membrane. This chain is Sesquipedalian-2, found in Mus musculus (Mouse).